Reading from the N-terminus, the 416-residue chain is Glyceraldehyde-3-phosphate dehydrogenase, chloroplastic (416 aa).

The N-terminal 78 residues, 1 to 78, are a transit peptide targeting the chloroplast; the sequence is MAFVAPVSSV…APARTSNAPS (78 aa). Residues 90–91, Asp114, and Arg158 each bind NADP(+); that span reads RI. D-glyceraldehyde 3-phosphate-binding positions include 232–234, Thr263, Arg278, 291–292, and Arg314; these read SCT and TG. Catalysis depends on Cys233, which acts as the Nucleophile. Asn396 serves as a coordination point for NADP(+).

The protein belongs to the glyceraldehyde-3-phosphate dehydrogenase family. As to quaternary structure, homotetramer.

It localises to the plastid. The protein resides in the chloroplast. The catalysed reaction is D-glyceraldehyde 3-phosphate + phosphate + NADP(+) = (2R)-3-phospho-glyceroyl phosphate + NADPH + H(+). It functions in the pathway carbohydrate biosynthesis; Calvin cycle. In Gracilaria gracilis (Red alga), this protein is Glyceraldehyde-3-phosphate dehydrogenase, chloroplastic (GAPA).